A 743-amino-acid polypeptide reads, in one-letter code: Elongation factor 2 (743 aa).

Residues N19–K265 enclose the tr-type G domain. GTP is bound by residues A28–T35, D94–H98, and N148–D151. Position 615 is a diphthamide (H615).

Belongs to the TRAFAC class translation factor GTPase superfamily. Classic translation factor GTPase family. EF-G/EF-2 subfamily.

It is found in the cytoplasm. Functionally, catalyzes the GTP-dependent ribosomal translocation step during translation elongation. During this step, the ribosome changes from the pre-translocational (PRE) to the post-translocational (POST) state as the newly formed A-site-bound peptidyl-tRNA and P-site-bound deacylated tRNA move to the P and E sites, respectively. Catalyzes the coordinated movement of the two tRNA molecules, the mRNA and conformational changes in the ribosome. This is Elongation factor 2 from Nanoarchaeum equitans (strain Kin4-M).